The chain runs to 132 residues: MSTRTASAGDIKEGSYIMIDNMPCRVVEVEKSKTGKHGSAKARIVGIGVIDGVKRTIVVPTDAAVEVPVIEKFTAQVISISGDSVQLMDLRNYQTFEIPSSYIEDEAKGKLEPGVQVEVWDVAGYKKIMRTR.

Lys36 carries the hypusine modification.

Belongs to the eIF-5A family.

Its subcellular location is the cytoplasm. Functions by promoting the formation of the first peptide bond. The polypeptide is Translation initiation factor 5A (eIF5A) (Caldivirga maquilingensis (strain ATCC 700844 / DSM 13496 / JCM 10307 / IC-167)).